Reading from the N-terminus, the 283-residue chain is uncharacterized protein (283 aa).

The next 3 helical transmembrane spans lie at 24 to 44, 64 to 84, and 96 to 116; these read LFGY…GMFI, TIAG…TLIA, and VIAI…GSLS.

Belongs to the MscS (TC 1.A.23) family.

It is found in the cell membrane. This is an uncharacterized protein from Buchnera aphidicola subsp. Schizaphis graminum (strain Sg).